A 1278-amino-acid polypeptide reads, in one-letter code: ABC transporter B family member 11 (1278 aa).

2 stretches are compositionally biased toward basic and acidic residues: residues 1–13 (MNGDGAREGDSVS) and 21–35 (SPKEGEETKKEEKSE). The tract at residues 1 to 35 (MNGDGAREGDSVSHEPSTSKSPKEGEETKKEEKSE) is disordered. The next 6 membrane-spanning stretches (helical) occupy residues 55-75 (VLLMICGSIGAIGNGMSLPFM), 106-126 (FVYLGLGTLGAAFLQVACWMI), 182-202 (FIQLVSTFVGGFVLAFIKGWL), 205-225 (LVMLTSIPLLAMAGAAMALIV), 285-305 (GLGLGVMFFVFFSSYALAIWF), and 314-334 (GYTGGAVINVIIIVVAGSMSL). Positions 58–346 (MICGSIGAIG…TSPCVTAFAA (289 aa)) constitute an ABC transmembrane type-1 1 domain. Residues 381–617 (IELKDVHFSY…SEGAYSQLIR (237 aa)) form the ABC transporter 1 domain. 416-423 (GESGSGKS) contacts ATP. Residues Asn-483, Asn-568, and Asn-653 are each glycosylated (N-linked (GlcNAc...) asparagine). The segment covering 629–654 (ELSSGSSFRNSNLKKSMEGTSSVGNS) has biased composition (polar residues). The segment at 629 to 656 (ELSSGSSFRNSNLKKSMEGTSSVGNSSR) is disordered. The region spanning 710 to 997 (LLLGTVAAAI…SSTFAPDSSK (288 aa)) is the ABC transmembrane type-1 2 domain. 2 helical membrane passes run 711-731 (LLGTVAAAINGAIFPLFGILI) and 751-771 (FWAIIFVALGVTSLIVSPTQM). An N-linked (GlcNAc...) asparagine glycan is attached at Asn-806. Transmembrane regions (helical) follow at residues 824–844 (ALVGDALSLAVQNVASAASGL), 845–865 (IIAFTASWELALIILVMLPLI), 932–952 (GFISGLGFGFSFFILFCVYAT), and 971–991 (VFQVFFALTMAAIGISQSSTF). Positions 1032–1271 (IELRHLSFTY…EGGVYASLVQ (240 aa)) constitute an ABC transporter 2 domain. Position 1067 to 1074 (1067 to 1074 (GESGSGKS)) interacts with ATP. 2 N-linked (GlcNAc...) asparagine glycosylation sites follow: Asn-1121 and Asn-1222.

It belongs to the ABC transporter superfamily. ABCB family. Multidrug resistance exporter (TC 3.A.1.201) subfamily. As to expression, present in roots and flower buds.

The protein localises to the membrane. It carries out the reaction (indol-3-yl)acetate(in) + ATP + H2O = (indol-3-yl)acetate(out) + ADP + phosphate + H(+). Its function is as follows. Involved in the regulation of auxin transport required for pistil elongation. This is ABC transporter B family member 11 from Arabidopsis thaliana (Mouse-ear cress).